The chain runs to 334 residues: Fe-S cluster assembly protein DRE2 (334 aa).

Residues Met-1 to Val-131 are N-terminal SAM-like domain. Residues Pro-132–Met-228 are linker. The tract at residues Asn-135–Arg-229 is disordered. Residues Thr-140 to Lys-150 are compositionally biased toward low complexity. Acidic residues-rich tracts occupy residues Asp-182–Gly-192 and Asp-215–Glu-227. Cys-238, Cys-249, Cys-252, and Cys-254 together coordinate [2Fe-2S] cluster. Residues Cys-238–Cys-254 form a fe-S binding site A region. Residues Cys-297, Cys-300, Cys-308, and Cys-311 each coordinate [4Fe-4S] cluster. 2 consecutive short sequence motifs (cx2C motif) follow at residues Cys-297–Cys-300 and Cys-308–Cys-311. The interval Cys-297–Cys-311 is fe-S binding site B.

This sequence belongs to the anamorsin family. Monomer. Interacts with TAH18. Interacts with MIA40. [2Fe-2S] cluster is required as a cofactor. The cofactor is [4Fe-4S] cluster.

It localises to the cytoplasm. The protein resides in the mitochondrion intermembrane space. Component of the cytosolic iron-sulfur (Fe-S) protein assembly (CIA) machinery required for the maturation of extramitochondrial Fe-S proteins. Part of an electron transfer chain functioning in an early step of cytosolic Fe-S biogenesis, facilitating the de novo assembly of a [4Fe-4S] cluster on the scaffold complex CFD1-NBP35. Electrons are transferred to DRE2 from NADPH via the FAD- and FMN-containing protein TAH18. TAH18-DRE2 are also required for the assembly of the diferric tyrosyl radical cofactor of ribonucleotide reductase (RNR), probably by providing electrons for reduction during radical cofactor maturation in the catalytic small subunit RNR2. The sequence is that of Fe-S cluster assembly protein DRE2 from Zygosaccharomyces rouxii (strain ATCC 2623 / CBS 732 / NBRC 1130 / NCYC 568 / NRRL Y-229).